Here is a 637-residue protein sequence, read N- to C-terminus: Chaperone protein DnaK (637 aa).

Thr-196 bears the Phosphothreonine; by autocatalysis mark. Disordered regions lie at residues 503 to 525 (AEINKMKDDAKQHADEDKKRKEE) and 598 to 637 (SGAGAAQAQPEAPQNSGSSQSSGGDGAVNAEYEVINDDKK). Positions 598–619 (SGAGAAQAQPEAPQNSGSSQSS) are enriched in low complexity.

It belongs to the heat shock protein 70 family.

Functionally, acts as a chaperone. The polypeptide is Chaperone protein DnaK (Chlorobium chlorochromatii (strain CaD3)).